Here is a 501-residue protein sequence, read N- to C-terminus: Glycine betaine/proline/ectoine/pipecolic acid transporter OusA (501 aa).

The Cytoplasmic portion of the chain corresponds to Met-1 to Glu-38. A helical transmembrane segment spans residues Trp-39–Gly-59. Residues Ala-60–Met-66 are Periplasmic-facing. Residues Ile-67–Phe-87 traverse the membrane as a helical segment. Over Gly-88 to Lys-98 the chain is Cytoplasmic. Residues Ile-99 to Ser-119 traverse the membrane as a helical segment. Topologically, residues Tyr-120 to Arg-122 are periplasmic. The chain crosses the membrane as a helical span at residues Ile-123–Gly-143. Residues Gly-144 to Asp-170 lie on the Cytoplasmic side of the membrane. The helical transmembrane segment at Phe-171–Ile-191 threads the bilayer. The Periplasmic portion of the chain corresponds to Gly-192–Ala-195. The helical transmembrane segment at Phe-196–Leu-216 threads the bilayer. Over Tyr-217–Ser-261 the chain is Cytoplasmic. A helical transmembrane segment spans residues Leu-262–Tyr-282. Over Met-283–Gly-298 the chain is Periplasmic. The helical transmembrane segment at Val-299 to Leu-319 threads the bilayer. Residues Ser-320–Lys-326 lie on the Cytoplasmic side of the membrane. Residues Pro-327 to Ile-347 traverse the membrane as a helical segment. Residues Asn-348–Asp-350 are Periplasmic-facing. Residues Ile-351–Gly-371 traverse the membrane as a helical segment. The Cytoplasmic portion of the chain corresponds to Val-372–Ala-391. A helical transmembrane segment spans residues Ser-392 to Val-412. The Periplasmic portion of the chain corresponds to Glu-413–Asn-417. Residues Leu-418–Phe-438 traverse the membrane as a helical segment. Residues Met-439–Asp-501 are Cytoplasmic-facing. Positions Lys-461–Gln-495 form a coiled coil.

It belongs to the major facilitator superfamily. Sugar transporter (TC 2.A.1.1) family.

Its subcellular location is the cell inner membrane. Involved in uptake and accumulation of various osmoprotectants. Allows the uptake of glycine betaine, proline, ectoine, and pipecolic acid. May be a contributory factor in the infection progression within the host. The protein is Glycine betaine/proline/ectoine/pipecolic acid transporter OusA of Dickeya dadantii (strain 3937) (Erwinia chrysanthemi (strain 3937)).